Consider the following 466-residue polypeptide: MSNSDYLPDYPLNSDLVKRLKSALDAKDEERVRDLICTEITPVDAVIELANDDWMKDPSAQLPTGMLLGDLDHLKPLMDQFFQDANVVFEINKDEMEWQVKSPATFGLSGLWTLEYKRELTTPLCIAAAHGHTACVRHLLGRGADPDASPGGRGALHEACLGGHTACVRLLLQHRADPDLLSAEGLAPLHLCRTAASLGCAQALLEHGASVQRVGGTGRDTPLHVAAQRGLDEHARLYLGRGAHVDARNGRGETALSAACGAARRPDEHGRCLRLCALLLRRGAEADARDEDERSPLHKACGHASHSLARLLLRHGADAGALDYGGASPLGRVLQTASCALQASPQRTVQALLNHGSPTVWPDAFPKVLKTCASVPAVIEVLFNSYPQLCLSESWKEVIPEEVFQMHKPFYQSLFALALTPRCLQHLCRCALRRLFGKRCFDLIPLLPLPKPLQNYLLLEPQGVLH.

ANK repeat units follow at residues 119–148 (ELTT…DPDA), 151–180 (GGRG…DPDL), 184–213 (EGLA…SVQR), 218–247 (GRDT…HVDA), 251–288 (RGET…EADA), and 292–321 (DERS…DAGA). An SOCS box domain is found at 405-463 (QMHKPFYQSLFALALTPRCLQHLCRCALRRLFGKRCFDLIPLLPLPKPLQNYLLLEPQG).

This sequence belongs to the ankyrin SOCS box (ASB) family.

It participates in protein modification; protein ubiquitination. Functionally, may be a substrate-recognition component of a SCF-like ECS (Elongin-Cullin-SOCS-box protein) E3 ubiquitin-protein ligase complex which mediates the ubiquitination and subsequent proteasomal degradation of target proteins. The chain is Ankyrin repeat and SOCS box protein 18 (ASB18) from Homo sapiens (Human).